The following is a 411-amino-acid chain: S-adenosylmethionine synthase (411 aa).

Residue His15 participates in ATP binding. Asp17 lines the Mg(2+) pocket. Glu43 provides a ligand contact to K(+). Positions 56 and 100 each coordinate L-methionine. The tract at residues 100–110 (QSPDIAQGVNE) is flexible loop. Residues 171–173 (DGK), 248–249 (KF), Asp257, 263–264 (RK), Ala280, and Lys284 each bind ATP. L-methionine is bound at residue Asp257. Lys288 provides a ligand contact to L-methionine.

Belongs to the AdoMet synthase family. In terms of assembly, homotetramer; dimer of dimers. Mg(2+) is required as a cofactor. It depends on K(+) as a cofactor.

The protein resides in the cytoplasm. The catalysed reaction is L-methionine + ATP + H2O = S-adenosyl-L-methionine + phosphate + diphosphate. Its pathway is amino-acid biosynthesis; S-adenosyl-L-methionine biosynthesis; S-adenosyl-L-methionine from L-methionine: step 1/1. Its function is as follows. Catalyzes the formation of S-adenosylmethionine (AdoMet) from methionine and ATP. The overall synthetic reaction is composed of two sequential steps, AdoMet formation and the subsequent tripolyphosphate hydrolysis which occurs prior to release of AdoMet from the enzyme. In Synechococcus sp. (strain CC9605), this protein is S-adenosylmethionine synthase.